A 507-amino-acid polypeptide reads, in one-letter code: 3-[(3aS,4S,7aS)-7a-methyl-1,5-dioxo-octahydro-1H-inden-4-yl]propanoyl:CoA ligase (507 aa).

Residues 177–185 (TSGTTGRSK), D391, R406, and K497 contribute to the ATP site.

This sequence belongs to the ATP-dependent AMP-binding enzyme family.

It catalyses the reaction 3-[(3aS,4S,7aS)-7a-methyl-1,5-dioxo-octahydro-1H-inden-4-yl]propanoate + ATP + CoA = 3-[(3aS,4S,7aS)-7a-methyl-1,5-dioxo-octahydro-1H-inden-4-yl]propanoyl-CoA + AMP + diphosphate. The enzyme catalyses 5-hydroxy-3-[(3aS,4S,5R,7aS)-7a-methyl-1,5-dioxo-octahydro-1H-inden-4-yl]propanoate + ATP + CoA = 3-[(3aS,4S,5R,7aS)-5-hydroxy-7a-methyl-1-oxo-octahydro-1H-inden-4-yl]propanoyl-CoA + AMP + diphosphate. In terms of biological role, involved in the catabolism of the rings C and D of cholesterol. Catalyzes the ATP-dependent CoA thioesterification of 3aalpha-H-4alpha(3'-propanoate)-7abeta-methylhexahydro-1,5-indanedione (HIP) to yield HIP-CoA. It can also use the hydroxylated analogs of HIP, 5alpha-OH HIP and 1beta-OH HIP. It requires that the side chain at C17 is completely removed. The sequence is that of 3-[(3aS,4S,7aS)-7a-methyl-1,5-dioxo-octahydro-1H-inden-4-yl]propanoyl:CoA ligase from Mycobacterium tuberculosis (strain ATCC 25618 / H37Rv).